Reading from the N-terminus, the 326-residue chain is Ribosomal large subunit pseudouridine synthase D (326 aa).

Residues 18-91 form the S4 RNA-binding domain; that stretch reads QRLDQALAEM…IPLDIVYEDE (74 aa). Residue Asp-139 is part of the active site.

This sequence belongs to the pseudouridine synthase RluA family. In terms of assembly, in late stage pre-50S ribosomal subunit interacts with ObgE and DarP(YjgA).

It is found in the cytoplasm. The catalysed reaction is uridine(1911/1915/1917) in 23S rRNA = pseudouridine(1911/1915/1917) in 23S rRNA. In terms of biological role, responsible for synthesis of pseudouridine from uracil at positions 1911, 1915 and 1917 in 23S ribosomal RNA. Other positions are not modified. Uridine isomerization occurs as a late step during the assembly of the large ribosomal subunit. Member of a network of 50S ribosomal subunit biogenesis factors (ObgE, RluD, RsfS and DarP(YjgA)) which assembles along the 30S-50S interface, allowing 23S rRNA modification and preventing incorrect 23S rRNA structures from forming. This chain is Ribosomal large subunit pseudouridine synthase D, found in Escherichia coli (strain K12).